Here is a 102-residue protein sequence, read N- to C-terminus: MYAVIKTGGKQYKVAEGEFLKVEKLVGEVGDSVEFGEVLMIGGEKIVVGAPHVAGATVTAKIAVQGKDKKILVFKSKRRKGTRKLRGHRQHKTVLKIEKISA.

Belongs to the bacterial ribosomal protein bL21 family. Part of the 50S ribosomal subunit. Contacts protein L20.

In terms of biological role, this protein binds to 23S rRNA in the presence of protein L20. The chain is Large ribosomal subunit protein bL21 from Pelobacter propionicus (strain DSM 2379 / NBRC 103807 / OttBd1).